The chain runs to 275 residues: Lysosome-associated membrane glycoprotein 5 (275 aa).

The first 18 residues, 1-18 (MEFQLLLLCSVWALGVCA), serve as a signal peptide directing secretion. Residues 19–228 (EQEVENLSGL…VTDQREQLEQ (210 aa)) are Extracellular-facing. N-linked (GlcNAc...) asparagine glycans are attached at residues Asn24 and Asn42. The helical transmembrane segment at 229–249 (TLPLVLGLILGLIIVITISVY) threads the bilayer. Residues 250–275 (HFHLKLNAAHTQQPTLPRDRSLYKNM) are Cytoplasmic-facing.

It belongs to the LAMP family. Post-translationally, glycosylated.

It is found in the cytoplasmic vesicle membrane. The protein resides in the cell membrane. The protein localises to the cell projection. It localises to the dendrite. Its subcellular location is the cytoplasmic vesicle. It is found in the secretory vesicle. The protein resides in the synaptic vesicle membrane. The protein localises to the growth cone membrane. It localises to the early endosome membrane. Its subcellular location is the recycling endosome. It is found in the endoplasmic reticulum-Golgi intermediate compartment membrane. The protein resides in the endosome membrane. Plays a role in short-term synaptic plasticity in a subset of GABAergic neurons in the brain. The protein is Lysosome-associated membrane glycoprotein 5 (lamp5) of Danio rerio (Zebrafish).